Consider the following 54-residue polypeptide: Large ribosomal subunit protein bL33B (54 aa).

It belongs to the bacterial ribosomal protein bL33 family.

In Mycobacterium sp. (strain JLS), this protein is Large ribosomal subunit protein bL33B.